A 432-amino-acid chain; its full sequence is Adenylosuccinate synthetase (432 aa).

Residues 11–17 and 39–41 contribute to the GTP site; these read GDEGKGK and GHT. D12 functions as the Proton acceptor in the catalytic mechanism. Residues D12 and G39 each contribute to the Mg(2+) site. IMP is bound by residues 12 to 15, 37 to 40, T134, R148, N230, T245, and R309; these read DEGK and NAGH. The active-site Proton donor is the H40. Residue 305–311 participates in substrate binding; sequence VTTGRKR. GTP is bound by residues R311, 337 to 339, and 419 to 421; these read KLD and GTG.

It belongs to the adenylosuccinate synthetase family. Homodimer. Requires Mg(2+) as cofactor.

Its subcellular location is the cytoplasm. It carries out the reaction IMP + L-aspartate + GTP = N(6)-(1,2-dicarboxyethyl)-AMP + GDP + phosphate + 2 H(+). It participates in purine metabolism; AMP biosynthesis via de novo pathway; AMP from IMP: step 1/2. Its function is as follows. Plays an important role in the de novo pathway and in the salvage pathway of purine nucleotide biosynthesis. Catalyzes the first committed step in the biosynthesis of AMP from IMP. The sequence is that of Adenylosuccinate synthetase from Candida glabrata (strain ATCC 2001 / BCRC 20586 / JCM 3761 / NBRC 0622 / NRRL Y-65 / CBS 138) (Yeast).